We begin with the raw amino-acid sequence, 256 residues long: Ubiquinone/menaquinone biosynthesis C-methyltransferase UbiE (256 aa).

Residues Thr79, Asp100, and 128 to 129 (DA) contribute to the S-adenosyl-L-methionine site.

It belongs to the class I-like SAM-binding methyltransferase superfamily. MenG/UbiE family.

The catalysed reaction is a 2-demethylmenaquinol + S-adenosyl-L-methionine = a menaquinol + S-adenosyl-L-homocysteine + H(+). It carries out the reaction a 2-methoxy-6-(all-trans-polyprenyl)benzene-1,4-diol + S-adenosyl-L-methionine = a 5-methoxy-2-methyl-3-(all-trans-polyprenyl)benzene-1,4-diol + S-adenosyl-L-homocysteine + H(+). The protein operates within quinol/quinone metabolism; menaquinone biosynthesis; menaquinol from 1,4-dihydroxy-2-naphthoate: step 2/2. It participates in cofactor biosynthesis; ubiquinone biosynthesis. Functionally, methyltransferase required for the conversion of demethylmenaquinol (DMKH2) to menaquinol (MKH2) and the conversion of 2-polyprenyl-6-methoxy-1,4-benzoquinol (DDMQH2) to 2-polyprenyl-3-methyl-6-methoxy-1,4-benzoquinol (DMQH2). This chain is Ubiquinone/menaquinone biosynthesis C-methyltransferase UbiE, found in Stutzerimonas stutzeri (strain A1501) (Pseudomonas stutzeri).